The following is a 493-amino-acid chain: Solute carrier family 2, facilitated glucose transporter member 3 (493 aa).

Over 1–10 the chain is Cytoplasmic; it reads MGTAKVTPSL. The helical transmembrane segment at 11–32 threads the bilayer; sequence VFAVTVATIGSFQFGYNTGVIN. Over 33–64 the chain is Extracellular; sequence APETIIKDFLNYTLEERLEDLPREGLLTTLWS. N-linked (GlcNAc...) asparagine glycosylation occurs at Asn-43. The chain crosses the membrane as a helical span at residues 65 to 85; that stretch reads LCVAIFSVGGMIGSFSVGLFV. Over 86-90 the chain is Cytoplasmic; it reads NRFGR. The chain crosses the membrane as a helical span at residues 91–111; sequence RNSMLLVNLIAILGGCLMGFA. The Extracellular portion of the chain corresponds to 112–118; sequence KIAESVE. The helical transmembrane segment at 119-142 threads the bilayer; it reads MLILGRLIIGIFCGLCTGFVPMYI. Residues 143-153 are Cytoplasmic-facing; that stretch reads GEVSPTALRGA. The chain crosses the membrane as a helical span at residues 154-174; sequence FGTLNQLGIVVGILVAQVFGL. Gln-159 serves as a coordination point for D-glucose. Topologically, residues 175–183 are extracellular; the sequence is DFILGSEEL. Residues 184 to 204 traverse the membrane as a helical segment; it reads WPGLLGLTIIPAILQSAALPF. Residues 205 to 269 are Cytoplasmic-facing; the sequence is CPESPRFLLI…LFKSPSYFQP (65 aa). At Thr-232 the chain carries Phosphothreonine. A helical transmembrane segment spans residues 270 to 290; it reads LLISVVLQLSQQFSGINAVFY. The interval 277 to 279 is important for selectivity against fructose; the sequence is QLS. D-glucose-binding positions include 280–281 and Asn-286; that span reads QQ. Over 291-304 the chain is Extracellular; it reads YSTGIFQDAGVQEP. A helical membrane pass occupies residues 305-325; it reads IYATIGAGVVNTIFTVVSLFL. Asn-315 lines the D-glucose pocket. At 326–331 the chain is on the cytoplasmic side; sequence VERAGR. Residues 332-352 form a helical membrane-spanning segment; the sequence is RTLHMIGLGGMAVCSVFMTIS. Topologically, residues 353–363 are extracellular; that stretch reads LLLKDEYEAMS. The helical transmembrane segment at 364 to 389 threads the bilayer; that stretch reads FVCIVAILVYVAFFEIGPGPIPWFIV. Glu-378 and Trp-386 together coordinate D-glucose. Residues 390–399 are Cytoplasmic-facing; it reads AELFSQGPRP. Residues 400–420 traverse the membrane as a helical segment; that stretch reads AAMAVAGCSNWTSNFLVGMFF. Residues 421–429 are Extracellular-facing; sequence PSAAAYLGA. The chain crosses the membrane as a helical span at residues 430–450; it reads YVFIIFAAFLVFFLIFTSFKV. Residues 451-493 lie on the Cytoplasmic side of the membrane; sequence PETKGRTFEDITRAFEGQAHSGKGSAGVELNSMQPVKETPGNA. Residues Ser-471, Ser-475, and Ser-482 each carry the phosphoserine modification. At Thr-489 the chain carries Phosphothreonine.

It belongs to the major facilitator superfamily. Sugar transporter (TC 2.A.1.1) family. Glucose transporter subfamily. Interacts with SMIM43; the interaction may promote SLC2A3-mediated glucose transport to meet the energy needs of mesendoderm differentiation. In terms of tissue distribution, brain and osteoblastic cells (at protein level). Highly expressed in brain.

The protein localises to the cell membrane. It localises to the perikaryon. Its subcellular location is the cell projection. The enzyme catalyses D-glucose(out) = D-glucose(in). It catalyses the reaction D-galactose(in) = D-galactose(out). Its activity is regulated as follows. Deoxyglucose transport is inhibited by D-glucose, D-galactose and maltose. Galactose transport is inhibited by D-glucose and maltose. Facilitative glucose transporter. Can also mediate the uptake of various other monosaccharides across the cell membrane. Mediates the uptake of glucose, 2-deoxyglucose, galactose, mannose, xylose and fucose, and probably also dehydroascorbate. Does not mediate fructose transport. Required for mesendoderm differentiation. This chain is Solute carrier family 2, facilitated glucose transporter member 3, found in Rattus norvegicus (Rat).